Reading from the N-terminus, the 630-residue chain is Elongation factor 4 (630 aa).

Positions 1–22 (MTVARNRAGAGPGKGSPISSFA) are disordered. Residues 30–211 (ARIRNFCIIA…EVVRQVPAPV (182 aa)) enclose the tr-type G domain. GTP-binding positions include 42–47 (DHGKST) and 158–161 (NKID).

The protein belongs to the TRAFAC class translation factor GTPase superfamily. Classic translation factor GTPase family. LepA subfamily.

Its subcellular location is the cell membrane. The enzyme catalyses GTP + H2O = GDP + phosphate + H(+). Functionally, required for accurate and efficient protein synthesis under certain stress conditions. May act as a fidelity factor of the translation reaction, by catalyzing a one-codon backward translocation of tRNAs on improperly translocated ribosomes. Back-translocation proceeds from a post-translocation (POST) complex to a pre-translocation (PRE) complex, thus giving elongation factor G a second chance to translocate the tRNAs correctly. Binds to ribosomes in a GTP-dependent manner. This Rhodococcus opacus (strain B4) protein is Elongation factor 4.